A 132-amino-acid chain; its full sequence is Two-component response regulator ORR42 (132 aa).

The Response regulatory domain occupies 11–125 (RALLVEDIKV…LEHILQETRS (115 aa)). Aspartate 61 is modified (4-aspartylphosphate).

It belongs to the ARR family. Type-C subfamily. Two-component system major event consists of a His-to-Asp phosphorelay between a sensor histidine kinase (HK) and a response regulator (RR). In plants, the His-to-Asp phosphorelay involves an additional intermediate named Histidine-containing phosphotransfer protein (HPt). This multistep phosphorelay consists of a His-Asp-His-Asp sequential transfer of a phosphate group between first a His and an Asp of the HK protein, followed by the transfer to a conserved His of the HPt protein and finally the transfer to an Asp in the receiver domain of the RR protein.

Functions as a response regulator involved in His-to-Asp phosphorelay signal transduction system. Phosphorylation of the Asp residue in the receiver domain activates the ability of the protein to promote the transcription of target genes. May directly activate some type-A response regulators in response to cytokinins. This Oryza sativa subsp. japonica (Rice) protein is Two-component response regulator ORR42.